A 370-amino-acid polypeptide reads, in one-letter code: Uroporphyrinogen decarboxylase (370 aa).

Residues 29 to 33 (RQAGR), D79, Y155, S210, and H342 contribute to the substrate site.

The protein belongs to the uroporphyrinogen decarboxylase family. Homodimer.

It is found in the cytoplasm. The enzyme catalyses uroporphyrinogen III + 4 H(+) = coproporphyrinogen III + 4 CO2. It functions in the pathway porphyrin-containing compound metabolism; protoporphyrin-IX biosynthesis; coproporphyrinogen-III from 5-aminolevulinate: step 4/4. Catalyzes the decarboxylation of four acetate groups of uroporphyrinogen-III to yield coproporphyrinogen-III. The polypeptide is Uroporphyrinogen decarboxylase (Verminephrobacter eiseniae (strain EF01-2)).